The following is a 144-amino-acid chain: Ig heavy chain V region MOPC 141 (144 aa).

A signal peptide spans 1-19 (MAVLALLFCLATFPSCILS). Positions 20–130 (QVQLKESGPG…YYGRSDKYFT (111 aa)) constitute an Ig-like domain.

This Mus musculus (Mouse) protein is Ig heavy chain V region MOPC 141.